A 119-amino-acid chain; its full sequence is Basic phospholipase A2 homolog 1 (119 aa).

7 cysteine pairs are disulfide-bonded: cysteine 11-cysteine 72, cysteine 27-cysteine 118, cysteine 29-cysteine 45, cysteine 44-cysteine 99, cysteine 51-cysteine 92, cysteine 61-cysteine 85, and cysteine 79-cysteine 90. The interval 107 to 117 is important for membrane-damaging activities in eukaryotes and bacteria; heparin-binding; sequence KENYNIDPKKR.

This sequence belongs to the phospholipase A2 family. Group I subfamily. D49 sub-subfamily. In terms of tissue distribution, expressed by the venom gland.

It localises to the secreted. The polypeptide is Basic phospholipase A2 homolog 1 (Notechis scutatus scutatus (Mainland tiger snake)).